The following is a 419-amino-acid chain: Serine hydroxymethyltransferase (419 aa).

(6S)-5,6,7,8-tetrahydrofolate-binding positions include Leu121 and 125 to 127; that span reads GHL. Lys230 is subject to N6-(pyridoxal phosphate)lysine. (6S)-5,6,7,8-tetrahydrofolate is bound at residue 354-356; the sequence is SPF.

It belongs to the SHMT family. In terms of assembly, homodimer. The cofactor is pyridoxal 5'-phosphate.

The protein resides in the cytoplasm. The enzyme catalyses (6R)-5,10-methylene-5,6,7,8-tetrahydrofolate + glycine + H2O = (6S)-5,6,7,8-tetrahydrofolate + L-serine. It participates in one-carbon metabolism; tetrahydrofolate interconversion. Its pathway is amino-acid biosynthesis; glycine biosynthesis; glycine from L-serine: step 1/1. Its function is as follows. Catalyzes the reversible interconversion of serine and glycine with tetrahydrofolate (THF) serving as the one-carbon carrier. This reaction serves as the major source of one-carbon groups required for the biosynthesis of purines, thymidylate, methionine, and other important biomolecules. Also exhibits THF-independent aldolase activity toward beta-hydroxyamino acids, producing glycine and aldehydes, via a retro-aldol mechanism. This is Serine hydroxymethyltransferase from Prochlorococcus marinus (strain SARG / CCMP1375 / SS120).